We begin with the raw amino-acid sequence, 1065 residues long: Isoleucine--tRNA ligase (1065 aa).

The 'HIGH' region motif lies at 49-59 (PYVSGAIHLGT). Positions 625 to 629 (KMSKS) match the 'KMSKS' region motif. Position 628 (K628) interacts with ATP.

It belongs to the class-I aminoacyl-tRNA synthetase family. IleS type 2 subfamily. Monomer. The cofactor is Zn(2+).

Its subcellular location is the cytoplasm. The catalysed reaction is tRNA(Ile) + L-isoleucine + ATP = L-isoleucyl-tRNA(Ile) + AMP + diphosphate. Functionally, catalyzes the attachment of isoleucine to tRNA(Ile). As IleRS can inadvertently accommodate and process structurally similar amino acids such as valine, to avoid such errors it has two additional distinct tRNA(Ile)-dependent editing activities. One activity is designated as 'pretransfer' editing and involves the hydrolysis of activated Val-AMP. The other activity is designated 'posttransfer' editing and involves deacylation of mischarged Val-tRNA(Ile). The chain is Isoleucine--tRNA ligase from Thermococcus kodakarensis (strain ATCC BAA-918 / JCM 12380 / KOD1) (Pyrococcus kodakaraensis (strain KOD1)).